The chain runs to 35 residues: Ranatuerin-2SPa (35 aa).

Cysteine 28 and cysteine 33 form a disulfide bridge.

Expressed by the skin glands.

The protein resides in the secreted. Functionally, antibacterial activity against Gram-positive bacterium S.aureus. Shows no detectable hemolytic activity towards human erythrocytes. The sequence is that of Ranatuerin-2SPa from Lithobates septentrionalis (Mink frog).